The following is a 627-amino-acid chain: Interferon-induced GTP-binding protein MxB (627 aa).

In terms of domain architecture, Dynamin-type G spans 34-307; the sequence is DLALPAIAVI…LVHHIQRSLP (274 aa). The interval 44–51 is G1 motif; the sequence is GDQSSGKS. 44 to 51 is a GTP binding site; the sequence is GDQSSGKS. The segment at 69–71 is G2 motif; it reads VTR. The G3 motif stretch occupies residues 145 to 148; sequence DLPG. GTP-binding positions include 145-149 and 214-217; these read DLPGI and TKPD. The G4 motif stretch occupies residues 214–217; the sequence is TKPD. A G5 motif region spans residues 246 to 249; it reads RCRG. Positions 541 to 627 constitute a GED domain; sequence LSEMKLHLES…MKAQNLLATY (87 aa).

Belongs to the TRAFAC class dynamin-like GTPase superfamily. Dynamin/Fzo/YdjA family.

It localises to the cytoplasm. This is Interferon-induced GTP-binding protein MxB (mxb) from Danio rerio (Zebrafish).